The sequence spans 204 residues: Ras-related protein RABG1 (204 aa).

Residue 12–19 (GDSGVGKT) coordinates GTP. The Effector region signature appears at 34 to 42 (HNSTIYVDL). Residues 60 to 64 (DTAGQ), 122 to 125 (NKTD), and 155 to 156 (SA) contribute to the GTP site. 2 S-geranylgeranyl cysteine lipidation sites follow: cysteine 202 and cysteine 204. Position 204 is a cysteine methyl ester (cysteine 204).

The protein belongs to the small GTPase superfamily. Rab family.

It is found in the cell membrane. Its function is as follows. Intracellular vesicle trafficking and protein transport. The sequence is that of Ras-related protein RABG1 (RABG1) from Arabidopsis thaliana (Mouse-ear cress).